The chain runs to 114 residues: Ribosome-binding factor A (114 aa).

Belongs to the RbfA family. In terms of assembly, monomer. Binds 30S ribosomal subunits, but not 50S ribosomal subunits or 70S ribosomes.

The protein localises to the cytoplasm. Functionally, one of several proteins that assist in the late maturation steps of the functional core of the 30S ribosomal subunit. Associates with free 30S ribosomal subunits (but not with 30S subunits that are part of 70S ribosomes or polysomes). Required for efficient processing of 16S rRNA. May interact with the 5'-terminal helix region of 16S rRNA. This is Ribosome-binding factor A from Macrococcus caseolyticus (strain JCSC5402) (Macrococcoides caseolyticum).